We begin with the raw amino-acid sequence, 523 residues long: Glutamate--cysteine ligase (523 aa).

The protein belongs to the glutamate--cysteine ligase type 1 family. Type 1 subfamily.

It catalyses the reaction L-cysteine + L-glutamate + ATP = gamma-L-glutamyl-L-cysteine + ADP + phosphate + H(+). The protein operates within sulfur metabolism; glutathione biosynthesis; glutathione from L-cysteine and L-glutamate: step 1/2. This is Glutamate--cysteine ligase from Baumannia cicadellinicola subsp. Homalodisca coagulata.